A 150-amino-acid chain; its full sequence is Probable cyclic pyranopterin monophosphate synthase (150 aa).

Residues 68 to 70 (YCH) and 104 to 105 (ME) each bind substrate. Asp119 is a catalytic residue.

This sequence belongs to the MoaC family. In terms of assembly, homohexamer; trimer of dimers.

It catalyses the reaction (8S)-3',8-cyclo-7,8-dihydroguanosine 5'-triphosphate = cyclic pyranopterin phosphate + diphosphate. The protein operates within cofactor biosynthesis; molybdopterin biosynthesis. In terms of biological role, catalyzes the conversion of (8S)-3',8-cyclo-7,8-dihydroguanosine 5'-triphosphate to cyclic pyranopterin monophosphate (cPMP). The protein is Probable cyclic pyranopterin monophosphate synthase of Thermoplasma volcanium (strain ATCC 51530 / DSM 4299 / JCM 9571 / NBRC 15438 / GSS1).